Consider the following 434-residue polypeptide: Glutamate-1-semialdehyde 2,1-aminomutase (434 aa).

Lysine 266 bears the N6-(pyridoxal phosphate)lysine mark.

The protein belongs to the class-III pyridoxal-phosphate-dependent aminotransferase family. HemL subfamily. Homodimer. It depends on pyridoxal 5'-phosphate as a cofactor.

It is found in the cytoplasm. It carries out the reaction (S)-4-amino-5-oxopentanoate = 5-aminolevulinate. The protein operates within porphyrin-containing compound metabolism; protoporphyrin-IX biosynthesis; 5-aminolevulinate from L-glutamyl-tRNA(Glu): step 2/2. The protein is Glutamate-1-semialdehyde 2,1-aminomutase of Fusobacterium nucleatum subsp. nucleatum (strain ATCC 25586 / DSM 15643 / BCRC 10681 / CIP 101130 / JCM 8532 / KCTC 2640 / LMG 13131 / VPI 4355).